A 93-amino-acid polypeptide reads, in one-letter code: Small ribosomal subunit protein uS19 (93 aa).

This sequence belongs to the universal ribosomal protein uS19 family.

Functionally, protein S19 forms a complex with S13 that binds strongly to the 16S ribosomal RNA. This is Small ribosomal subunit protein uS19 from Blochmanniella floridana.